The sequence spans 225 residues: Myelin-associated neurite-outgrowth inhibitor (225 aa).

Residues 1–58 (MNPVYSPGSSGVPYANAKGIGYPAGFPMGYAAAAPAYSPNMYAGPNPAFQQELEHPAH) lie on the Cytoplasmic side of the membrane. The chain crosses the membrane as a helical span at residues 59–75 (VSSGVQMFMFGHAFSVA). The Extracellular portion of the chain corresponds to 76–173 (RNGAIPSGYT…PAPIQSPRGN (98 aa)). Residues 174–193 (GVAMGMVAGTTMAMSAGTLL) form a helical membrane-spanning segment. Residues 194 to 225 (TSHYPSPVAPQVTMPTYRPPGTPTYSYVPPQW) lie on the Cytoplasmic side of the membrane.

It belongs to the FAM168 family.

The protein localises to the cytoplasm. The protein resides in the perinuclear region. Its subcellular location is the cell membrane. It localises to the cell projection. It is found in the axon. Inhibitor of neuronal axonal outgrowth. This Xenopus laevis (African clawed frog) protein is Myelin-associated neurite-outgrowth inhibitor (fam168b).